A 77-amino-acid chain; its full sequence is Sec-independent protein translocase protein TatA (77 aa).

A helical transmembrane segment spans residues 1–21 (MGSFSIWHWLVVLAIVVLVFG). A disordered region spans residues 40–77 (KEGMKGAEEENTQPPPSHQQVTGHSIKSEIEEKDQTKV). Positions 65–77 (IKSEIEEKDQTKV) are enriched in basic and acidic residues.

Belongs to the TatA/E family. In terms of assembly, the Tat system comprises two distinct complexes: a TatABC complex, containing multiple copies of TatA, TatB and TatC subunits, and a separate TatA complex, containing only TatA subunits. Substrates initially bind to the TatABC complex, which probably triggers association of the separate TatA complex to form the active translocon.

The protein resides in the cell inner membrane. Functionally, part of the twin-arginine translocation (Tat) system that transports large folded proteins containing a characteristic twin-arginine motif in their signal peptide across membranes. TatA could form the protein-conducting channel of the Tat system. This Nitrosomonas eutropha (strain DSM 101675 / C91 / Nm57) protein is Sec-independent protein translocase protein TatA.